A 297-amino-acid chain; its full sequence is Adrenocorticotropic hormone receptor (297 aa).

At 1-23 the chain is on the extracellular side; sequence MKHIINSYENINNTARNNSDCPR. N-linked (GlcNAc...) asparagine glycosylation is found at Asn12 and Asn17. Cystine bridges form between Cys21–Cys253 and Cys245–Cys251. A helical membrane pass occupies residues 24 to 49; the sequence is VVLPEEIFFTISIVGVLENLIVLLAV. Residues 50–58 are Cytoplasmic-facing; sequence FKNKNLQAP. Residues 59–79 form a helical membrane-spanning segment; it reads MYFFICSLAISDMLGSLYKIL. Residues 80 to 104 lie on the Extracellular side of the membrane; the sequence is ENILIILRNMGYLKPRGSFETTADD. The chain crosses the membrane as a helical span at residues 105–126; it reads IIDSLFVLSLLGSIFSLSVIAA. At 127-147 the chain is on the cytoplasmic side; it reads DRYITIFHALRYHSIVTMRRT. Residues 148–168 traverse the membrane as a helical segment; sequence VVVLTVIWTFCTGTGITMVIF. The Extracellular segment spans residues 169-180; the sequence is SHHVPTVITFTS. The chain crosses the membrane as a helical span at residues 181–199; sequence LFPLMLVFILCLYVHMFLL. The Cytoplasmic portion of the chain corresponds to 200–217; the sequence is ARSHTRKISTLPRANMKG. The helical transmembrane segment at 218–244 threads the bilayer; sequence AITLTILLGVFIFCWAPFVLHVLLMTF. Residues 245 to 256 are Extracellular-facing; it reads CPSNPYCACYMS. The chain crosses the membrane as a helical span at residues 257-278; the sequence is LFQVNGMLIMCNAVIDPFIYAF. The Cytoplasmic segment spans residues 279-297; that stretch reads RSPELRDAFKKMIFCSRYW. Cys293 carries S-palmitoyl cysteine lipidation.

It belongs to the G-protein coupled receptor 1 family. As to quaternary structure, homodimer. Interacts with corticotropin (ACTH). Interacts with MRAP; this interaction targets MC2R to the plasma membrane. Interacts with MRAP2; competing with MRAP for binding to MC2R and impairing the binding of corticotropin (ACTH). Post-translationally, ubiquitinated by MGRN1 that may be involved in post-endocytic trafficking and/or degradation of internalized receptor. As to expression, melanocytes and corticoadrenal tissue.

Its subcellular location is the cell membrane. Its function is as follows. Hormone receptor primarily expressed in adrenal cortex that plays a key role in regulating adrenocortical function. Upon corticotropin (ACTH) binding, facilitates the release of adrenal glucocorticoids, including cortisol and corticosterone. In addition, MC2R is required for fetal and neonatal adrenal gland development. Mechanistically, activates adenylate cyclase (cAMP), the MAPK cascade as well as the cAMP-dependent protein kinase A pathway leading to steroidogenic factor 1/NR5A1-mediated transcriptional activation. The polypeptide is Adrenocorticotropic hormone receptor (MC2R) (Homo sapiens (Human)).